Here is a 152-residue protein sequence, read N- to C-terminus: MSKRLQVVLNQDVRKLGNNGDLVEVAPGYARNYLLPQGIASLATPGILRQVEQRREKERQRLLAELQDAEARKVALKTVGKLIIRKQVGEENQIFGTVTTQDVADAIKERAGQDVDRRGITLPEIGKTGSYEAQVKLHPEVTATVQFDVIPL.

It belongs to the bacterial ribosomal protein bL9 family.

Binds to the 23S rRNA. This Picosynechococcus sp. (strain ATCC 27264 / PCC 7002 / PR-6) (Agmenellum quadruplicatum) protein is Large ribosomal subunit protein bL9.